The sequence spans 545 residues: T-complex protein 1 subunit gamma (545 aa).

The residue at position 1 (methionine 1) is an N-acetylmethionine. The segment at 1–24 (MMGHRPVLVLSQNTKRESGRKVQS) is disordered. Residue serine 11 is modified to Phosphoserine. Residue lysine 15 forms a Glycyl lysine isopeptide (Lys-Gly) (interchain with G-Cter in SUMO2) linkage. Residue glycine 42 coordinates ADP. Residue glycine 42 participates in ATP binding. Mg(2+) is bound at residue aspartate 93. ADP is bound by residues glycine 94, threonine 95, threonine 96, serine 97, threonine 162, and lysine 163. ATP contacts are provided by glycine 94, threonine 95, and threonine 96. Serine 170 is modified (phosphoserine). The residue at position 222 (lysine 222) is an N6-acetyllysine. Serine 243 and serine 244 each carry phosphoserine. Tyrosine 247 is subject to Phosphotyrosine. Glycyl lysine isopeptide (Lys-Gly) (interchain with G-Cter in SUMO2) cross-links involve residues lysine 248 and lysine 249. Serine 252 is modified (phosphoserine). A disulfide bridge connects residues cysteine 366 and cysteine 372. Lysine 381 is covalently cross-linked (Glycyl lysine isopeptide (Lys-Gly) (interchain with G-Cter in SUMO2)). Glycine 411 is an ADP binding site. Glycine 411 contributes to the ATP binding site. A phosphothreonine mark is found at threonine 430 and threonine 459. Residues glycine 482, glutamate 483, glutamate 497, and lysine 502 each contribute to the ADP site. Glycine 482 provides a ligand contact to ATP. Glutamate 497 provides a ligand contact to ATP. The tract at residues 526-545 (HKKKGDDQSRQGGAPDAGQE) is disordered.

This sequence belongs to the TCP-1 chaperonin family. Component of the chaperonin-containing T-complex (TRiC), a hexadecamer composed of two identical back-to-back stacked rings enclosing a protein folding chamber. Each ring is made up of eight different subunits: TCP1/CCT1, CCT2, CCT3, CCT4, CCT5, CCT6A/CCT6, CCT7, CCT8. Interacts with PACRG. Interacts with DNAAF4. Interacts with DLEC1.

The protein resides in the cytoplasm. The catalysed reaction is ATP + H2O = ADP + phosphate + H(+). Its function is as follows. Component of the chaperonin-containing T-complex (TRiC), a molecular chaperone complex that assists the folding of actin, tubulin and other proteins upon ATP hydrolysis. The TRiC complex mediates the folding of WRAP53/TCAB1, thereby regulating telomere maintenance. As part of the TRiC complex may play a role in the assembly of BBSome, a complex involved in ciliogenesis regulating transports vesicles to the cilia. This is T-complex protein 1 subunit gamma (CCT3) from Homo sapiens (Human).